Reading from the N-terminus, the 562-residue chain is Arginine--tRNA ligase (562 aa).

A 'HIGH' region motif is present at residues 129-139; the sequence is ANPTGPLHVGH.

It belongs to the class-I aminoacyl-tRNA synthetase family. Monomer.

It is found in the cytoplasm. It carries out the reaction tRNA(Arg) + L-arginine + ATP = L-arginyl-tRNA(Arg) + AMP + diphosphate. The chain is Arginine--tRNA ligase from Xanthomonas oryzae pv. oryzae (strain MAFF 311018).